We begin with the raw amino-acid sequence, 93 residues long: YcgL domain-containing protein VFMJ11_1829 (93 aa).

The YcgL domain occupies 1 to 84 (MFCSIYKSTK…PPENLLEKYK (84 aa)).

The sequence is that of YcgL domain-containing protein VFMJ11_1829 from Aliivibrio fischeri (strain MJ11) (Vibrio fischeri).